Consider the following 382-residue polypeptide: Intermediate transcription factor 3 large subunit (382 aa).

It belongs to the orthopoxvirus OPG150 family. Heterodimerizes with protein A8 to form the virus intermediate transcription factor (VITF)-3.

Functionally, acts with RNA polymerase to initiate transcription from intermediate gene promoters. In Cynomys gunnisoni (Gunnison's prairie dog), this protein is Intermediate transcription factor 3 large subunit (OPG150).